Here is a 199-residue protein sequence, read N- to C-terminus: Small ribosomal subunit protein uS4c (199 aa).

Over residues 1–24 (MESDQSKVESDQSKMESDQSKVES) the composition is skewed to basic and acidic residues. Residues 1 to 35 (MESDQSKVESDQSKMESDQSKVESDQSISQSTSKK) form a disordered region. One can recognise an S4 RNA-binding domain in the interval 84–146 (MRLDNIIFRL…QKSQELIKRN (63 aa)).

The protein belongs to the universal ribosomal protein uS4 family. Part of the 30S ribosomal subunit. Contacts protein S5. The interaction surface between S4 and S5 is involved in control of translational fidelity.

It localises to the plastid. It is found in the chloroplast. Functionally, one of the primary rRNA binding proteins, it binds directly to 16S rRNA where it nucleates assembly of the body of the 30S subunit. In terms of biological role, with S5 and S12 plays an important role in translational accuracy. The polypeptide is Small ribosomal subunit protein uS4c (rps4) (Psilotum nudum (Whisk fern)).